The following is a 336-amino-acid chain: Flap endonuclease 1 (336 aa).

The interval 1–98 (MGADIGDLFE…AEIEERKKRR (98 aa)) is N-domain. Residues D27, D80, E151, E153, D172, D174, and D235 each coordinate Mg(2+). An I-domain region spans residues 115–256 (DAKKYAQAAG…KALNYIKTYG (142 aa)). The interaction with PCNA stretch occupies residues 328–336 (TQATLERWF).

It belongs to the XPG/RAD2 endonuclease family. FEN1 subfamily. As to quaternary structure, interacts with PCNA. PCNA stimulates the nuclease activity without altering cleavage specificity. Mg(2+) is required as a cofactor.

Structure-specific nuclease with 5'-flap endonuclease and 5'-3' exonuclease activities involved in DNA replication and repair. During DNA replication, cleaves the 5'-overhanging flap structure that is generated by displacement synthesis when DNA polymerase encounters the 5'-end of a downstream Okazaki fragment. Binds the unpaired 3'-DNA end and kinks the DNA to facilitate 5' cleavage specificity. Cleaves one nucleotide into the double-stranded DNA from the junction in flap DNA, leaving a nick for ligation. Also involved in the base excision repair (BER) pathway. Acts as a genome stabilization factor that prevents flaps from equilibrating into structures that lead to duplications and deletions. Also possesses 5'-3' exonuclease activity on nicked or gapped double-stranded DNA. This is Flap endonuclease 1 from Archaeoglobus fulgidus (strain ATCC 49558 / DSM 4304 / JCM 9628 / NBRC 100126 / VC-16).